Reading from the N-terminus, the 391-residue chain is Formate-dependent phosphoribosylglycinamide formyltransferase (391 aa).

Residues 20-21 and glutamate 80 each bind N(1)-(5-phospho-beta-D-ribosyl)glycinamide; that span reads EL. Residues arginine 112, lysine 153, 158–163, 193–196, and glutamate 201 each bind ATP; these read SSGKGQ and EGFV. An ATP-grasp domain is found at 117–306; the sequence is RLAAETLGLP…EFALHVRAIL (190 aa). Positions 265 and 277 each coordinate Mg(2+). N(1)-(5-phospho-beta-D-ribosyl)glycinamide-binding positions include aspartate 284, lysine 354, and 361–362; that span reads RR.

Belongs to the PurK/PurT family. Homodimer.

It catalyses the reaction N(1)-(5-phospho-beta-D-ribosyl)glycinamide + formate + ATP = N(2)-formyl-N(1)-(5-phospho-beta-D-ribosyl)glycinamide + ADP + phosphate + H(+). The protein operates within purine metabolism; IMP biosynthesis via de novo pathway; N(2)-formyl-N(1)-(5-phospho-D-ribosyl)glycinamide from N(1)-(5-phospho-D-ribosyl)glycinamide (formate route): step 1/1. Its function is as follows. Involved in the de novo purine biosynthesis. Catalyzes the transfer of formate to 5-phospho-ribosyl-glycinamide (GAR), producing 5-phospho-ribosyl-N-formylglycinamide (FGAR). Formate is provided by PurU via hydrolysis of 10-formyl-tetrahydrofolate. The polypeptide is Formate-dependent phosphoribosylglycinamide formyltransferase (Shewanella putrefaciens (strain CN-32 / ATCC BAA-453)).